Consider the following 519-residue polypeptide: Light-independent protochlorophyllide reductase subunit B (519 aa).

[4Fe-4S] cluster is bound at residue D36. The active-site Proton donor is the D274. 409–410 (GL) serves as a coordination point for substrate. Residues 426–465 (DEAGPSHHGGHSPKPSEAARTPDKVEERADPAPEAPQTGS) are disordered. Positions 445 to 456 (RTPDKVEERADP) are enriched in basic and acidic residues.

The protein belongs to the ChlB/BchB/BchZ family. As to quaternary structure, protochlorophyllide reductase is composed of three subunits; BchL, BchN and BchB. Forms a heterotetramer of two BchB and two BchN subunits. The cofactor is [4Fe-4S] cluster.

It catalyses the reaction chlorophyllide a + oxidized 2[4Fe-4S]-[ferredoxin] + 2 ADP + 2 phosphate = protochlorophyllide a + reduced 2[4Fe-4S]-[ferredoxin] + 2 ATP + 2 H2O. The protein operates within porphyrin-containing compound metabolism; bacteriochlorophyll biosynthesis (light-independent). Functionally, component of the dark-operative protochlorophyllide reductase (DPOR) that uses Mg-ATP and reduced ferredoxin to reduce ring D of protochlorophyllide (Pchlide) to form chlorophyllide a (Chlide). This reaction is light-independent. The NB-protein (BchN-BchB) is the catalytic component of the complex. This is Light-independent protochlorophyllide reductase subunit B from Jannaschia sp. (strain CCS1).